We begin with the raw amino-acid sequence, 216 residues long: 3-keto-L-gulonate-6-phosphate decarboxylase UlaD (216 aa).

Asp-11 serves as a coordination point for substrate. 2 residues coordinate Mg(2+): Glu-33 and Asp-62. Substrate is bound at residue Arg-192.

The protein belongs to the HPS/KGPDC family. KGPDC subfamily. In terms of assembly, homodimer. Mg(2+) is required as a cofactor.

The enzyme catalyses 3-dehydro-L-gulonate 6-phosphate + H(+) = L-xylulose 5-phosphate + CO2. Its pathway is cofactor degradation; L-ascorbate degradation; D-xylulose 5-phosphate from L-ascorbate: step 2/4. Its function is as follows. Catalyzes the decarboxylation of 3-keto-L-gulonate-6-P into L-xylulose-5-P. Is involved in the anaerobic L-ascorbate utilization. In Shigella dysenteriae serotype 1 (strain Sd197), this protein is 3-keto-L-gulonate-6-phosphate decarboxylase UlaD.